The chain runs to 117 residues: Transcription elongation factor A protein-like 8 (117 aa).

The disordered stretch occupies residues 1–82 (MQKSCDENEG…EEVIRGVDEL (82 aa)). Basic and acidic residues predominate over residues 41-82 (NVREETEGSHRGEPAEPSPEPKEDTPARHLNPEEVIRGVDEL). Residues 73 to 100 (EEVIRGVDELERLREEIRRVRNKFVLMH) adopt a coiled-coil conformation.

Belongs to the TFS-II family. TFA subfamily.

The protein resides in the nucleus. Its function is as follows. May be involved in transcriptional regulation. In Mus musculus (Mouse), this protein is Transcription elongation factor A protein-like 8 (Tceal8).